The primary structure comprises 44 residues: Protein PsbN (44 aa).

The chain crosses the membrane as a helical span at residues 6–26 (FFFTLFLWFFLLSITIYSIYI).

It belongs to the PsbN family.

It is found in the plastid. The protein localises to the chloroplast thylakoid membrane. May play a role in photosystem I and II biogenesis. This Oedogonium cardiacum (Filamentous green alga) protein is Protein PsbN.